Here is a 275-residue protein sequence, read N- to C-terminus: Ribosomal RNA small subunit methyltransferase A (275 aa).

The S-adenosyl-L-methionine site is built by asparagine 28, leucine 30, glycine 55, glutamate 77, aspartate 103, and asparagine 123.

Belongs to the class I-like SAM-binding methyltransferase superfamily. rRNA adenine N(6)-methyltransferase family. RsmA subfamily.

The protein resides in the cytoplasm. The catalysed reaction is adenosine(1518)/adenosine(1519) in 16S rRNA + 4 S-adenosyl-L-methionine = N(6)-dimethyladenosine(1518)/N(6)-dimethyladenosine(1519) in 16S rRNA + 4 S-adenosyl-L-homocysteine + 4 H(+). In terms of biological role, specifically dimethylates two adjacent adenosines (A1518 and A1519) in the loop of a conserved hairpin near the 3'-end of 16S rRNA in the 30S particle. May play a critical role in biogenesis of 30S subunits. This is Ribosomal RNA small subunit methyltransferase A from Allorhizobium ampelinum (strain ATCC BAA-846 / DSM 112012 / S4) (Agrobacterium vitis (strain S4)).